Consider the following 229-residue polypeptide: MKVGIVGAMAQEVEILASLIENKNVVHIAGCTIYQGNIQDKEVALLQSGIGKVAAAMGTTLLLQMFKPDIVINTGSAGGVSSGLKVGDVVVSTQTVYHDADVTAFGYAKGQLPACPPAFISDPKLTALVANVAKQQGINLTSGLICSGDSFINSAEKLAWIKANFPEVVAIEMEATAIAQVCHKFNIPFVVIRAISDVGDGEASMSFEEFLPLAAKQSSSMVLKILQSL.

E12 acts as the Proton acceptor in catalysis. Substrate is bound by residues G78, I152, and 173–174 (ME). D197 (proton donor) is an active-site residue.

This sequence belongs to the PNP/UDP phosphorylase family. MtnN subfamily.

The catalysed reaction is S-adenosyl-L-homocysteine + H2O = S-(5-deoxy-D-ribos-5-yl)-L-homocysteine + adenine. It catalyses the reaction S-methyl-5'-thioadenosine + H2O = 5-(methylsulfanyl)-D-ribose + adenine. It carries out the reaction 5'-deoxyadenosine + H2O = 5-deoxy-D-ribose + adenine. The protein operates within amino-acid biosynthesis; L-methionine biosynthesis via salvage pathway; S-methyl-5-thio-alpha-D-ribose 1-phosphate from S-methyl-5'-thioadenosine (hydrolase route): step 1/2. In terms of biological role, catalyzes the irreversible cleavage of the glycosidic bond in both 5'-methylthioadenosine (MTA) and S-adenosylhomocysteine (SAH/AdoHcy) to adenine and the corresponding thioribose, 5'-methylthioribose and S-ribosylhomocysteine, respectively. Also cleaves 5'-deoxyadenosine, a toxic by-product of radical S-adenosylmethionine (SAM) enzymes, into 5-deoxyribose and adenine. This Histophilus somni (strain 129Pt) (Haemophilus somnus) protein is 5'-methylthioadenosine/S-adenosylhomocysteine nucleosidase.